A 142-amino-acid polypeptide reads, in one-letter code: Hemoglobin subunit alpha (142 aa).

A Globin domain is found at 2 to 142 (VLSAADKGHV…VSTVLTSKYR (141 aa)). Phosphoserine is present on Ser-4. Residues Lys-8 and Lys-12 each carry the N6-succinyllysine modification. Lys-17 is subject to N6-acetyllysine; alternate. Position 17 is an N6-succinyllysine; alternate (Lys-17). Tyr-25 carries the post-translational modification Phosphotyrosine. Ser-36 is modified (phosphoserine). Lys-41 carries the N6-succinyllysine modification. Ser-50 is subject to Phosphoserine. His-59 is a binding site for O2. Heme b is bound at residue His-88. At Ser-103 the chain carries Phosphoserine. At Thr-109 the chain carries Phosphothreonine. Ser-125 bears the Phosphoserine mark. Thr-135 and Thr-138 each carry phosphothreonine. Residue Ser-139 is modified to Phosphoserine.

The protein belongs to the globin family. In terms of assembly, heterotetramer of two alpha chains and two beta chains. In terms of tissue distribution, red blood cells.

In terms of biological role, involved in oxygen transport from the lung to the various peripheral tissues. Its function is as follows. Hemopressin acts as an antagonist peptide of the cannabinoid receptor CNR1. Hemopressin-binding efficiently blocks cannabinoid receptor CNR1 and subsequent signaling. In Notamacropus eugenii (Tammar wallaby), this protein is Hemoglobin subunit alpha (HBA).